A 491-amino-acid chain; its full sequence is Cytochrome P450 2K3 (491 aa).

Cysteine 434 is a binding site for heme.

It belongs to the cytochrome P450 family. Heme serves as cofactor.

The protein resides in the endoplasmic reticulum membrane. It localises to the microsome membrane. The enzyme catalyses an organic molecule + reduced [NADPH--hemoprotein reductase] + O2 = an alcohol + oxidized [NADPH--hemoprotein reductase] + H2O + H(+). In Oncorhynchus mykiss (Rainbow trout), this protein is Cytochrome P450 2K3 (cyp2k3).